We begin with the raw amino-acid sequence, 673 residues long: Paralemmin-3 (673 aa).

Coiled coils occupy residues 4–49 (SSLY…LRER) and 75–101 (GQAQ…LQSA). Disordered stretches follow at residues 49-78 (RWLM…GQAQ) and 99-213 (QSAS…GEAK). Over residues 123 to 137 (LSQSIVEAGSVGQTD) the composition is skewed to polar residues. 2 positions are modified to phosphoserine: serine 124 and serine 143. Threonine 151 is modified (phosphothreonine). Residues serine 155, serine 157, and serine 260 each carry the phosphoserine modification. Disordered stretches follow at residues 295 to 343 (VPEV…SFIW) and 356 to 673 (LLVE…CAVM). Residue threonine 301 is modified to Phosphothreonine. Serine 325 bears the Phosphoserine mark. Gly residues predominate over residues 327 to 338 (EGDGQGGSGGEE). Serine 375 and serine 420 each carry phosphoserine. Composition is skewed to basic and acidic residues over residues 392–477 (EAEK…KRGA) and 487–532 (GVEK…EKTQ). 2 positions are modified to phosphoserine: serine 544 and serine 660. 2 S-palmitoyl cysteine lipidation sites follow: cysteine 667 and cysteine 669. Residue cysteine 670 is modified to Cysteine methyl ester. Cysteine 670 carries the S-farnesyl cysteine lipid modification. The propeptide at 671–673 (AVM) is removed in mature form.

Belongs to the paralemmin family. As to quaternary structure, interacts with SIGIRR. Palmitoylated on Cys-667 and Cys-669 and prenylated on Cys-670; which is required for membrane association.

The protein resides in the cytoplasm. Its subcellular location is the cell membrane. ATP-binding protein, which may act as a adapter in the Toll-like receptor (TLR) signaling. The protein is Paralemmin-3 (PALM3) of Homo sapiens (Human).